Here is a 297-residue protein sequence, read N- to C-terminus: MAKALQGVMAALLTPFDHQQQLDSESLRRLVRFNIGQGIDGLYVGGSTGEAFVQSLAEREQVLEIVAEEAKGKITLIAHVGTVSTAESQQLASAAKRYGFDAVSAVTPFYYPFSFEEHCDHYRAIIDSADGLPMVVYNIPALSGVKLTLDQINTLVTLPGVSALKQTSGDLFQMEQIRRAHPDLVLYNGYDEIFASGLLAGADGGIGSTYNIMGWRYQGIVQALREGDVAKAQRLQTECNKVIDLLIKTGVFRGLKTVLHYMDVVSVPLCRKPFAPVDEKYLPALKALAQQLMEEKA.

The aceneuramate site is built by Ser-47 and Thr-48. Residue Tyr-137 is the Proton donor of the active site. Residue Lys-165 is the Schiff-base intermediate with substrate of the active site. Positions 167, 189, 191, 192, and 208 each coordinate aceneuramate.

Belongs to the DapA family. NanA subfamily. In terms of assembly, homotetramer.

It is found in the cytoplasm. It catalyses the reaction aceneuramate = aldehydo-N-acetyl-D-mannosamine + pyruvate. The protein operates within amino-sugar metabolism; N-acetylneuraminate degradation; D-fructose 6-phosphate from N-acetylneuraminate: step 1/5. Functionally, catalyzes the reversible aldol cleavage of N-acetylneuraminic acid (sialic acid; Neu5Ac) to form pyruvate and N-acetylmannosamine (ManNAc) via a Schiff base intermediate. This chain is N-acetylneuraminate lyase, found in Salmonella typhimurium (strain LT2 / SGSC1412 / ATCC 700720).